A 247-amino-acid polypeptide reads, in one-letter code: Protein NipSnap homolog 3B (247 aa).

Residues K45, K48, K57, and K166 each carry the N6-succinyllysine modification.

It belongs to the NipSnap family.

It localises to the cytoplasm. Its subcellular location is the cytosol. The sequence is that of Protein NipSnap homolog 3B (Nipsnap3b) from Mus musculus (Mouse).